A 102-amino-acid polypeptide reads, in one-letter code: Large ribosomal subunit protein bL28 (102 aa).

Residues 1 to 20 (MSRRCELTAKGPQVGHKVSH) form a disordered region.

Belongs to the bacterial ribosomal protein bL28 family.

This is Large ribosomal subunit protein bL28 from Bradyrhizobium sp. (strain BTAi1 / ATCC BAA-1182).